Reading from the N-terminus, the 601-residue chain is Polypeptide N-acetylgalactosaminyltransferase 11 (601 aa).

At 1–7 (MGSAALR) the chain is on the cytoplasmic side. A helical; Signal-anchor for type II membrane protein transmembrane segment spans residues 8 to 28 (CFCYGCLFTSVTWTLLLFIYF). Residues Asn-29 and Asn-202 are each glycosylated (N-linked (GlcNAc...) asparagine). Over 29-601 (NFSEESQGFR…SPSQQWHLEN (573 aa)) the chain is Lumenal. Positions 143–254 (LPMASIVICF…EMWLQPLLAP (112 aa)) are catalytic subdomain A. The interval 312–374 (PFRSPTMAGG…PCSRVGHIFR (63 aa)) is catalytic subdomain B. The Ricin B-type lectin domain occupies 469–600 (RPKILQRGRL…GSPSQQWHLE (132 aa)). A disulfide bond links Cys-486 and Cys-505. A glycan (N-linked (GlcNAc...) asparagine) is linked at Asn-508. 2 cysteine pairs are disulfide-bonded: Cys-529–Cys-546 and Cys-571–Cys-589.

It belongs to the glycosyltransferase 2 family. GalNAc-T subfamily. As to quaternary structure, interacts with notch1. Mn(2+) is required as a cofactor. It depends on Ca(2+) as a cofactor.

Its subcellular location is the golgi apparatus membrane. It carries out the reaction L-seryl-[protein] + UDP-N-acetyl-alpha-D-galactosamine = a 3-O-[N-acetyl-alpha-D-galactosaminyl]-L-seryl-[protein] + UDP + H(+). The catalysed reaction is L-threonyl-[protein] + UDP-N-acetyl-alpha-D-galactosamine = a 3-O-[N-acetyl-alpha-D-galactosaminyl]-L-threonyl-[protein] + UDP + H(+). The protein operates within protein modification; protein glycosylation. Functionally, polypeptide N-acetylgalactosaminyltransferase that catalyzes the initiation of protein O-linked glycosylation and is involved in left/right asymmetry by mediating O-glycosylation of NOTCH1. O-glycosylation of NOTCH1 promotes activation of NOTCH1, modulating the balance between motile and immotile (sensory) cilia at the left-right organiser (LRO). Polypeptide N-acetylgalactosaminyltransferases catalyze the transfer of an N-acetyl-D-galactosamine residue to a serine or threonine residue on the protein receptor. The polypeptide is Polypeptide N-acetylgalactosaminyltransferase 11 (galnt11) (Xenopus tropicalis (Western clawed frog)).